The following is a 443-amino-acid chain: Tryptophan synthase beta chain (443 aa).

Position 110 is an N6-(pyridoxal phosphate)lysine (Lys-110).

Belongs to the TrpB family. As to quaternary structure, tetramer of two alpha and two beta chains. It depends on pyridoxal 5'-phosphate as a cofactor.

It carries out the reaction (1S,2R)-1-C-(indol-3-yl)glycerol 3-phosphate + L-serine = D-glyceraldehyde 3-phosphate + L-tryptophan + H2O. It functions in the pathway amino-acid biosynthesis; L-tryptophan biosynthesis; L-tryptophan from chorismate: step 5/5. Functionally, the beta subunit is responsible for the synthesis of L-tryptophan from indole and L-serine. This is Tryptophan synthase beta chain from Thermococcus onnurineus (strain NA1).